A 520-amino-acid polypeptide reads, in one-letter code: Ribonuclease Y (520 aa).

Residues 1-3 lie on the Extracellular side of the membrane; it reads MTP. A helical transmembrane segment spans residues 4–24; it reads IMMVLISILLILLGLVVGYFV. Residues 25-520 are Cytoplasmic-facing; the sequence is RKTIAEAKIA…RETRAVEYAK (496 aa). Residues 29 to 141 adopt a coiled-coil conformation; it reads AEAKIAGARG…KVDEMIRMQQ (113 aa). Positions 210–273 constitute a KH domain; sequence TVSVVNLPND…ETARIALDKL (64 aa). The region spanning 336 to 429 is the HD domain; that stretch reads VLKHSMEVAF…VAAADALSAA (94 aa).

It belongs to the RNase Y family. Homodimer. Component of a possible RNA degradosome complex composed of rny, rnjA, rnjB, pnp, pfkA and eno (although rnjA and rnjB's presence is unclear). Interacts with RNA helicase CshA which may also be a member of the RNA degradosome complex. Interacts with full-length dynamin-like protein DynA. Mg(2+) is required as a cofactor. It depends on Mn(2+) as a cofactor. Zn(2+) serves as cofactor.

Its subcellular location is the cell membrane. Its activity is regulated as follows. Shows preference for transcripts carrying a monophosphate group at the 5' end. Its function is as follows. Endoribonuclease that initiates mRNA decay. Initiates the decay of all SAM-dependent riboswitches, such as yitJ riboswitch. Involved in processing of the gapA operon mRNA, it cleaves between cggR and gapA. Is also the decay-initiating endonuclease for rpsO mRNA. Involved in degradation of type I toxin-antitoxin system bsrG/SR4 RNAs and a minor role in degradation of type I toxin-antitoxin system bsrE/SR5 degradation. This is Ribonuclease Y (rny) from Bacillus subtilis (strain 168).